The chain runs to 547 residues: ATP-dependent RNA helicase ROK1 (547 aa).

The Q motif signature appears at 111-139; it reads DLITRFNLHPYLLANLKKNKYTDPTPIQC. The 183-residue stretch at 142–324 folds into the Helicase ATP-binding domain; that stretch reads IPTMLNGRDL…NSIMSTDPLR (183 aa). 155-162 contacts ATP; it reads APTGSGKT. The DEAD box signature appears at 272–275; sequence DEAD. A Helicase C-terminal domain is found at 336–498; sequence TVEQKLVYAG…EVPDWLNNLA (163 aa). The tract at residues 511-547 is disordered; sequence RPIKRKKISTQHALANNKKKRAKQQMKGLKKMKKDDE. A compositionally biased stretch (basic residues) spans 527-547; that stretch reads NKKKRAKQQMKGLKKMKKDDE.

The protein belongs to the DEAD box helicase family. DDX52/ROK1 subfamily. Interacts with the U3 snoRNA and is associated with the 90S and 40S pre-ribosomes.

The protein resides in the nucleus. It is found in the nucleolus. It catalyses the reaction ATP + H2O = ADP + phosphate + H(+). Functionally, ATP-dependent RNA helicase involved in 40S ribosomal subunit biogenesis. Required for the processing and cleavage of 35S pre-rRNA at sites A0, A1, and A2, leading to mature 18S rRNA. This is ATP-dependent RNA helicase ROK1 (ROK1) from Yarrowia lipolytica (strain CLIB 122 / E 150) (Yeast).